The sequence spans 484 residues: Glycogen synthase (484 aa).

Lysine 15 lines the ADP-alpha-D-glucose pocket.

The protein belongs to the glycosyltransferase 1 family. Bacterial/plant glycogen synthase subfamily.

It catalyses the reaction [(1-&gt;4)-alpha-D-glucosyl](n) + ADP-alpha-D-glucose = [(1-&gt;4)-alpha-D-glucosyl](n+1) + ADP + H(+). It participates in glycan biosynthesis; glycogen biosynthesis. Synthesizes alpha-1,4-glucan chains using ADP-glucose. The chain is Glycogen synthase from Koribacter versatilis (strain Ellin345).